Here is a 142-residue protein sequence, read N- to C-terminus: Large ribosomal subunit protein uL11 (142 aa).

This sequence belongs to the universal ribosomal protein uL11 family. Part of the ribosomal stalk of the 50S ribosomal subunit. Interacts with L10 and the large rRNA to form the base of the stalk. L10 forms an elongated spine to which L12 dimers bind in a sequential fashion forming a multimeric L10(L12)X complex. One or more lysine residues are methylated.

In terms of biological role, forms part of the ribosomal stalk which helps the ribosome interact with GTP-bound translation factors. In Magnetococcus marinus (strain ATCC BAA-1437 / JCM 17883 / MC-1), this protein is Large ribosomal subunit protein uL11.